Reading from the N-terminus, the 130-residue chain is Large ribosomal subunit protein eL22 (130 aa).

It belongs to the eukaryotic ribosomal protein eL22 family.

The chain is Large ribosomal subunit protein eL22 (rpl-22) from Caenorhabditis elegans.